The chain runs to 257 residues: Imidazole glycerol phosphate synthase subunit hisF1 (257 aa).

Active-site residues include aspartate 11 and aspartate 130.

It belongs to the HisA/HisF family. As to quaternary structure, heterodimer of HisH and HisF.

It localises to the cytoplasm. It catalyses the reaction 5-[(5-phospho-1-deoxy-D-ribulos-1-ylimino)methylamino]-1-(5-phospho-beta-D-ribosyl)imidazole-4-carboxamide + L-glutamine = D-erythro-1-(imidazol-4-yl)glycerol 3-phosphate + 5-amino-1-(5-phospho-beta-D-ribosyl)imidazole-4-carboxamide + L-glutamate + H(+). It participates in amino-acid biosynthesis; L-histidine biosynthesis; L-histidine from 5-phospho-alpha-D-ribose 1-diphosphate: step 5/9. Its function is as follows. IGPS catalyzes the conversion of PRFAR and glutamine to IGP, AICAR and glutamate. The HisF subunit catalyzes the cyclization activity that produces IGP and AICAR from PRFAR using the ammonia provided by the HisH subunit. This is Imidazole glycerol phosphate synthase subunit hisF1 (hisF1) from Vibrio vulnificus (strain YJ016).